The chain runs to 525 residues: Peptide chain release factor 3 (525 aa).

One can recognise a tr-type G domain in the interval 9–276 (AKRRTFAIIS…GFTRYAPAPQ (268 aa)). Residues 18–25 (SHPDAGKT), 86–90 (DTPGH), and 140–143 (NKFD) contribute to the GTP site.

It belongs to the TRAFAC class translation factor GTPase superfamily. Classic translation factor GTPase family. PrfC subfamily.

The protein localises to the cytoplasm. Functionally, increases the formation of ribosomal termination complexes and stimulates activities of RF-1 and RF-2. It binds guanine nucleotides and has strong preference for UGA stop codons. It may interact directly with the ribosome. The stimulation of RF-1 and RF-2 is significantly reduced by GTP and GDP, but not by GMP. The chain is Peptide chain release factor 3 from Francisella tularensis subsp. mediasiatica (strain FSC147).